The following is a 617-amino-acid chain: Protein fem-1 homolog A (617 aa).

7 ANK repeats span residues 2–32 (DISA…EERA), 40–70 (EGGT…NVAL), 82–111 (EGAP…PVNN), 115–144 (TNST…DLEV), 148–177 (HGHT…DVNR), 181–210 (KGNT…RMER), and 213–242 (YGMT…ASRE). 2 TPR repeats span residues 245–279 (IHAL…RWAG) and 339–372 (SYYI…QQSN). ANK repeat units lie at residues 482-524 (GGHT…DVDS) and 528-557 (DNNT…HFDA).

It belongs to the fem-1 family. In terms of assembly, component of a CRL2 E3 ubiquitin-protein ligase complex, also named ECS (Elongin BC-CUL2/5-SOCS-box protein) complex.

It localises to the mitochondrion. Its subcellular location is the cytoplasm. Its pathway is protein modification; protein ubiquitination. In terms of biological role, substrate-recognition component of a Cul2-RING (CRL2) E3 ubiquitin-protein ligase complex of the DesCEND (destruction via C-end degrons) pathway, which recognizes a C-degron located at the extreme C terminus of target proteins, leading to their ubiquitination and degradation. The C-degron recognized by the DesCEND pathway is usually a motif of less than ten residues and can be present in full-length proteins, truncated proteins or proteolytically cleaved forms. The CRL2(FEM1A) complex specifically recognizes proteins with an arginine at the C-terminus: recognizes and binds proteins ending with -Lys/Arg-Xaa-Arg and -Lys/Arg-Xaa-Xaa-Arg C-degrons, leading to their ubiquitination and degradation. This chain is Protein fem-1 homolog A, found in Danio rerio (Zebrafish).